We begin with the raw amino-acid sequence, 126 residues long: Aspartate 1-decarboxylase (126 aa).

S25 acts as the Schiff-base intermediate with substrate; via pyruvic acid in catalysis. S25 bears the Pyruvic acid (Ser) mark. T57 contacts substrate. Residue Y58 is the Proton donor of the active site. 73 to 75 contributes to the substrate binding site; the sequence is GGA.

Belongs to the PanD family. In terms of assembly, heterooctamer of four alpha and four beta subunits. It depends on pyruvate as a cofactor. Post-translationally, is synthesized initially as an inactive proenzyme, which is activated by self-cleavage at a specific serine bond to produce a beta-subunit with a hydroxyl group at its C-terminus and an alpha-subunit with a pyruvoyl group at its N-terminus.

The protein resides in the cytoplasm. The catalysed reaction is L-aspartate + H(+) = beta-alanine + CO2. Its pathway is cofactor biosynthesis; (R)-pantothenate biosynthesis; beta-alanine from L-aspartate: step 1/1. Its function is as follows. Catalyzes the pyruvoyl-dependent decarboxylation of aspartate to produce beta-alanine. This Xanthomonas axonopodis pv. citri (strain 306) protein is Aspartate 1-decarboxylase.